The sequence spans 98 residues: N(2)-fixation sustaining protein CowN (98 aa).

This sequence belongs to the CowN family.

In terms of biological role, is required to sustain N(2)-dependent growth in the presence of low levels of carbon monoxide (CO). Probably acts by protecting the N(2) fixation ability of the nitrogenase complex, which is inactivated in the presence of CO. This is N(2)-fixation sustaining protein CowN from Paramagnetospirillum magneticum (strain ATCC 700264 / AMB-1) (Magnetospirillum magneticum).